The following is a 165-amino-acid chain: Ribosome maturation factor RimM (165 aa).

The region spanning 94-165 (EDEFYIADLN…YVVLNYQREI (72 aa)) is the PRC barrel domain.

Belongs to the RimM family. In terms of assembly, binds ribosomal protein uS19.

Its subcellular location is the cytoplasm. An accessory protein needed during the final step in the assembly of 30S ribosomal subunit, possibly for assembly of the head region. Essential for efficient processing of 16S rRNA. May be needed both before and after RbfA during the maturation of 16S rRNA. It has affinity for free ribosomal 30S subunits but not for 70S ribosomes. The polypeptide is Ribosome maturation factor RimM (Rickettsia felis (strain ATCC VR-1525 / URRWXCal2) (Rickettsia azadi)).